Reading from the N-terminus, the 516-residue chain is uncharacterized protein (516 aa).

The disordered stretch occupies residues 1 to 35; the sequence is MAERTSESSSESASFDLEKQQSNHHDRYQSSVSSE. Basic and acidic residues predominate over residues 16–28; the sequence is DLEKQQSNHHDRY. Ser31 is subject to Phosphoserine. The next 12 helical transmembrane spans lie at 77–97, 111–131, 143–163, 166–186, 198–218, 231–251, 301–321, 345–365, 386–406, 412–432, 439–461, and 481–501; these read VAVM…FSGA, VALL…VVWA, MIIA…AKDI, VMIC…TVAG, GLVI…SPIV, WTSY…IIFH, LLIF…VYGI, SLPY…VALF, LPSM…LAWT, IHWI…ITIF, IIDC…RSSF, and AGSL…MLFL.

It belongs to the major facilitator superfamily.

The protein localises to the membrane. This is an uncharacterized protein from Schizosaccharomyces pombe (strain 972 / ATCC 24843) (Fission yeast).